The chain runs to 179 residues: Cell division protein ZapC (179 aa).

This sequence belongs to the ZapC family. As to quaternary structure, interacts directly with FtsZ.

Its subcellular location is the cytoplasm. Functionally, contributes to the efficiency of the cell division process by stabilizing the polymeric form of the cell division protein FtsZ. Acts by promoting interactions between FtsZ protofilaments and suppressing the GTPase activity of FtsZ. The polypeptide is Cell division protein ZapC (Aliivibrio salmonicida (strain LFI1238) (Vibrio salmonicida (strain LFI1238))).